Here is a 240-residue protein sequence, read N- to C-terminus: Pyridoxine 5'-phosphate synthase (240 aa).

Asparagine 7 provides a ligand contact to 3-amino-2-oxopropyl phosphate. 9–10 (DH) contacts 1-deoxy-D-xylulose 5-phosphate. Arginine 18 serves as a coordination point for 3-amino-2-oxopropyl phosphate. Residue histidine 43 is the Proton acceptor of the active site. Residues arginine 45 and histidine 50 each coordinate 1-deoxy-D-xylulose 5-phosphate. Glutamate 70 serves as the catalytic Proton acceptor. Threonine 100 is a binding site for 1-deoxy-D-xylulose 5-phosphate. The Proton donor role is filled by histidine 191. Residues glycine 192 and 213 to 214 (GH) contribute to the 3-amino-2-oxopropyl phosphate site.

It belongs to the PNP synthase family. Homooctamer; tetramer of dimers.

The protein localises to the cytoplasm. The enzyme catalyses 3-amino-2-oxopropyl phosphate + 1-deoxy-D-xylulose 5-phosphate = pyridoxine 5'-phosphate + phosphate + 2 H2O + H(+). Its pathway is cofactor biosynthesis; pyridoxine 5'-phosphate biosynthesis; pyridoxine 5'-phosphate from D-erythrose 4-phosphate: step 5/5. In terms of biological role, catalyzes the complicated ring closure reaction between the two acyclic compounds 1-deoxy-D-xylulose-5-phosphate (DXP) and 3-amino-2-oxopropyl phosphate (1-amino-acetone-3-phosphate or AAP) to form pyridoxine 5'-phosphate (PNP) and inorganic phosphate. The polypeptide is Pyridoxine 5'-phosphate synthase (Synechococcus elongatus (strain ATCC 33912 / PCC 7942 / FACHB-805) (Anacystis nidulans R2)).